The chain runs to 353 residues: Glutamine synthetase cytosolic isozyme 1-5 (353 aa).

Thr2 bears the N-acetylthreonine mark. Residue Ser3 is modified to Phosphoserine. In terms of domain architecture, GS beta-grasp spans 19 to 99 (IIAEYIWIGG…VMCDAYRPAG (81 aa)). Residues 106–353 (NRHKAVKIFD…TSMIAETTIL (248 aa)) form the GS catalytic domain.

The protein belongs to the glutamine synthetase family. Homooctamer. As to expression, not expressed in roots.

Its subcellular location is the cytoplasm. The catalysed reaction is L-glutamate + NH4(+) + ATP = L-glutamine + ADP + phosphate + H(+). The sequence is that of Glutamine synthetase cytosolic isozyme 1-5 (GLN1-5) from Arabidopsis thaliana (Mouse-ear cress).